The chain runs to 194 residues: Fe/S biogenesis protein NfuA (194 aa).

[4Fe-4S] cluster is bound by residues C152 and C155.

The protein belongs to the NfuA family. Homodimer. Requires [4Fe-4S] cluster as cofactor.

Involved in iron-sulfur cluster biogenesis. Binds a 4Fe-4S cluster, can transfer this cluster to apoproteins, and thereby intervenes in the maturation of Fe/S proteins. Could also act as a scaffold/chaperone for damaged Fe/S proteins. This is Fe/S biogenesis protein NfuA from Stutzerimonas stutzeri (strain A1501) (Pseudomonas stutzeri).